A 542-amino-acid polypeptide reads, in one-letter code: Chaperonin GroEL (542 aa).

ATP is bound by residues 29-32, K50, 86-90, G414, and D494; these read TLGP and DGTTT.

The protein belongs to the chaperonin (HSP60) family. Forms a cylinder of 14 subunits composed of two heptameric rings stacked back-to-back. Interacts with the co-chaperonin GroES.

Its subcellular location is the cytoplasm. The catalysed reaction is ATP + H2O + a folded polypeptide = ADP + phosphate + an unfolded polypeptide.. Functionally, together with its co-chaperonin GroES, plays an essential role in assisting protein folding. The GroEL-GroES system forms a nano-cage that allows encapsulation of the non-native substrate proteins and provides a physical environment optimized to promote and accelerate protein folding. In Cytophaga hutchinsonii (strain ATCC 33406 / DSM 1761 / CIP 103989 / NBRC 15051 / NCIMB 9469 / D465), this protein is Chaperonin GroEL.